Reading from the N-terminus, the 113-residue chain is MNVLLGGLVIFATFVTLCNGSCYLMPNKMVPGDSTKECTDLKGNKHPLNSRWKTENCDECDCLEKEISCCSLVAIPVGYDQDNCQKIFKQEDCKYIVVEKKDPNKTCEVTQWI.

The N-terminal stretch at 1 to 20 is a signal peptide; it reads MNVLLGGLVIFATFVTLCNG. 5 disulfides stabilise this stretch: C22–C70, C38–C62, C57–C93, C60–C69, and C84–C107.

The protein belongs to the beta-microseminoprotein family.

The protein resides in the secreted. This chain is Beta-microseminoprotein A1 (MSPA), found in Saguinus oedipus (Cotton-top tamarin).